The sequence spans 94 residues: FXYD domain-containing ion transport regulator 6 (94 aa).

An N-terminal signal peptide occupies residues 1 to 17 (METVLILCSLLAPVVLA). The Extracellular segment spans residues 18–34 (SAAEKEKEKDPFYYDYQ). A helical transmembrane segment spans residues 35–57 (TLRIGGLVFAVVLFSVGILLILS). Over 58-94 (RRCKCSFNQKPRAPGDEEAQVENLITTNAAEPQKAEN) the chain is Cytoplasmic.

The protein belongs to the FXYD family. As to quaternary structure, regulatory subunit of the sodium/potassium-transporting ATPase which is composed of a catalytic alpha subunit, a non-catalytic beta subunit and an additional regulatory subunit. The regulatory subunit, a member of the FXYD protein family, modulates the enzymatic activity in a tissue- and isoform-specific way by changing affinities of the Na+/K+-ATPase toward Na(+), K(+) or ATP. Expressed in the neuronal fibers of the medial part of lateral habenula nucleus, thalamus, hypothalamus, stria terminalis, zona incerta, amygdaloid body and cingulum, olfactory bulb, hippocampus, cerebral cortex and cerebellum. In the cerebellum there is a predominant expression pattern in the granule layer of lobules VI-IX of the posterior lobe. Detected in inner ear.

It localises to the cell membrane. In terms of biological role, associates with and regulates the activity of the sodium/potassium-transporting ATPase (NKA) which catalyzes the hydrolysis of ATP coupled with the exchange of Na(+) and K(+) ions across the plasma membrane. Decreases the apparent affinity of the transporter for Na(+). In addition to modulating NKA kinetics, may also function as a regulator of NKA localization to the plasma membrane. This is FXYD domain-containing ion transport regulator 6 (Fxyd6) from Rattus norvegicus (Rat).